The sequence spans 172 residues: Adenine phosphoribosyltransferase (172 aa).

It belongs to the purine/pyrimidine phosphoribosyltransferase family. As to quaternary structure, homodimer.

The protein resides in the cytoplasm. The enzyme catalyses AMP + diphosphate = 5-phospho-alpha-D-ribose 1-diphosphate + adenine. The protein operates within purine metabolism; AMP biosynthesis via salvage pathway; AMP from adenine: step 1/1. Functionally, catalyzes a salvage reaction resulting in the formation of AMP, that is energically less costly than de novo synthesis. The polypeptide is Adenine phosphoribosyltransferase (Polynucleobacter necessarius subsp. necessarius (strain STIR1)).